A 280-amino-acid chain; its full sequence is Cytochrome c1 (280 aa).

The signal sequence occupies residues 1–21 (MKKLLISAVSALVLGSGAALA). Heme c contacts are provided by C55, C58, H59, and M205. The helical transmembrane segment at 249–267 (MGLVAVVMLGLLSVMLYLT) threads the bilayer.

The main subunits of complex b-c1 are: cytochrome b, cytochrome c1 and the Rieske protein. In terms of processing, binds 1 heme c group covalently per subunit.

It is found in the cell membrane. Functionally, component of the ubiquinol-cytochrome c reductase complex (complex III or cytochrome b-c1 complex), which is a respiratory chain that generates an electrochemical potential coupled to ATP synthesis. c1 functions as an electron donor to cytochrome c. This chain is Cytochrome c1 (petC), found in Rhodobacter capsulatus (Rhodopseudomonas capsulata).